The following is a 357-amino-acid chain: Peptide chain release factor 1 (357 aa).

Position 235 is an N5-methylglutamine (Gln-235). Residues Arg-282 to Arg-294 are compositionally biased toward basic and acidic residues. The segment at Arg-282 to Thr-308 is disordered.

It belongs to the prokaryotic/mitochondrial release factor family. Methylated by PrmC. Methylation increases the termination efficiency of RF1.

It localises to the cytoplasm. Functionally, peptide chain release factor 1 directs the termination of translation in response to the peptide chain termination codons UAG and UAA. The polypeptide is Peptide chain release factor 1 (Brucella anthropi (strain ATCC 49188 / DSM 6882 / CCUG 24695 / JCM 21032 / LMG 3331 / NBRC 15819 / NCTC 12168 / Alc 37) (Ochrobactrum anthropi)).